Reading from the N-terminus, the 182-residue chain is Peptidoglycan-recognition protein SB2 (182 aa).

An N-terminal signal peptide occupies residues 1–17 (MKLQLALVLCGLTLALG). The N-acetylmuramoyl-L-alanine amidase domain maps to 40 to 165 (PVRLIIIHHT…CQTKATACPG (126 aa)). His-47 serves as a coordination point for Zn(2+). A disulfide bond links Cys-54 and Cys-60. N-linked (GlcNAc...) asparagine glycosylation is present at Asn-149. Zn(2+)-binding residues include His-155 and Cys-163.

It belongs to the N-acetylmuramoyl-L-alanine amidase 2 family. It depends on Zn(2+) as a cofactor.

The protein resides in the secreted. The catalysed reaction is Hydrolyzes the link between N-acetylmuramoyl residues and L-amino acid residues in certain cell-wall glycopeptides.. Its function is as follows. N-acetylmuramyl-L-alanine amidase involved in innate immunity by degrading bacterial peptidoglycans (PGN). Probably plays a scavenger role by digesting biologically active PGN into biologically inactive fragments. Has no direct bacteriolytic activity. This chain is Peptidoglycan-recognition protein SB2 (PGRP-SB2), found in Drosophila simulans (Fruit fly).